The chain runs to 975 residues: NLR family member X1 (975 aa).

The transit peptide at 1 to 86 directs the protein to the mitochondrion; the sequence is MRWGHHLPRA…EAIQRHRRNL (86 aa). The required for interaction with MAVS stretch occupies residues 75 to 556; sequence ATEAIQRHRR…RALPLLFNLI (482 aa). Positions 160 to 483 constitute an NACHT domain; that stretch reads QTVVLYGTVG…LRFFLAPCVE (324 aa). 166-173 provides a ligand contact to ATP; it reads GTVGTGKS. Residues 556–974 are required for the repression of MAVS-induced interferon signaling; sequence IKVVPRVFGR…ALLEQLGSSG (419 aa). The region spanning 667-694 is the LRRNT domain; the sequence is RQVLPPSELLDHLFFHYEFQNQRFSAEV. 8 LRR repeats span residues 695–718, 724–747, 749–777, 778–801, 811–834, 835–857, 858–877, and 878–899; these read LSSL…VVAA, RHAL…TLLP, FLRA…LLHD, QCQI…VLME, HLSL…LDRN, RQLQ…ALAR, AARE…ELSS, and EGRQ…VVVS. The LRRCT domain occupies 906–970; the sequence is VSEYWSVILS…GEVRALLEQL (65 aa).

The protein belongs to the NLRP family. Homohexamer. Interacts with MAVS. Interacts with TUFM. As to quaternary structure, (Microbial infection) Interacts with influenza A virus protein PB1-F2. Ubiquitously expressed. Strongest expression in mammary gland, heart and muscle. Detected in HeLa, HEK293T, THP-1, HL-60, Raji and Jurkat cell lines (at protein level).

The protein resides in the mitochondrion outer membrane. Participates in antiviral signaling. Acts as a negative regulator of MAVS-mediated antiviral responses, through the inhibition of the virus-induced RLH (RIG-like helicase)-MAVS interaction. Instead, promotes autophagy by interacting with TUFM and subsequently recruiting the autophagy-related proteins ATG5 and ATG12. Also regulates MAVS-dependent NLRP3 inflammasome activation to attenuate apoptosis. Has no inhibitory function on NF-kappa-B signaling pathway, but enhances NF-kappa-B and JUN N-terminal kinase dependent signaling through the production of reactive oxygen species. Regulates viral mediated-inflammation and energy metabolism in a sex-dependent manner. In females, prevents uncontrolled inflammation and energy metabolism and thus, may contribute to the sex differences observed in infectious and inflammatory diseases. The protein is NLR family member X1 (NLRX1) of Homo sapiens (Human).